The sequence spans 865 residues: Fanconi-associated nuclease 1 homolog (865 aa).

Residues 35–62 form a UBZ4-type zinc finger; the sequence is GKICPLCETKFSLASYKSHMNTCNVADD. Residues C38, C41, H53, and C57 each coordinate Zn(2+). 2 disordered regions span residues 90 to 140 and 162 to 187; these read DASF…SLDV and RRSSRLLQNSQKDQADNANKEDPVKK. Basic and acidic residues-rich tracts occupy residues 93–112 and 174–187; these read FSDKSENPTKRRKTDEREVP and DQADNANKEDPVKK. 4 residues coordinate Mn(2+): E682, D810, E825, and V826. The region spanning 744-857 is the VRR-NUC domain; it reads QELIEENIRK…GIRAEVCHVA (114 aa).

It belongs to the FAN1 family. Mn(2+) is required as a cofactor. Requires Mg(2+) as cofactor.

The protein resides in the nucleus. It catalyses the reaction Hydrolytically removes 5'-nucleotides successively from the 3'-hydroxy termini of 3'-hydroxy-terminated oligonucleotides.. Its function is as follows. Nuclease required for the repair of DNA interstrand cross-links (ICL). Acts as a 5'-3' exonuclease that anchors at a cut end of DNA and cleaves DNA successively at every third nucleotide, allowing to excise an ICL from one strand through flanking incisions. This chain is Fanconi-associated nuclease 1 homolog (fan-1), found in Caenorhabditis elegans.